A 399-amino-acid chain; its full sequence is P2X purinoceptor 1 (399 aa).

Topologically, residues 1–28 are cytoplasmic; that stretch reads MARRLQDELSAFFFEYDTPRMVLVRNKK. Residues 29-50 traverse the membrane as a helical segment; sequence VGVIFRLIQLVVLVYVIGWVFV. At 51–338 the chain is on the extracellular side; that stretch reads YEKGYQTSSD…IPTMTTIGSG (288 aa). CTP-binding residues include K68, K70, and K140. K70 serves as a coordination point for ATP. Cystine bridges form between C117/C165, C126/C149, and C132/C159. N-linked (GlcNAc...) asparagine glycosylation is found at N153 and N184. T186 lines the CTP pocket. An ATP-binding site is contributed by T186. Residue N210 is glycosylated (N-linked (GlcNAc...) asparagine). 2 cysteine pairs are disulfide-bonded: C217–C227 and C261–C270. S286, N290, and R292 together coordinate ATP. 2 residues coordinate CTP: N290 and R292. An N-linked (GlcNAc...) asparagine glycan is attached at N300. K309 lines the CTP pocket. K309 provides a ligand contact to ATP. The pore-forming motif stretch occupies residues 331–338; that stretch reads TMTTIGSG. The helical transmembrane segment at 339-358 threads the bilayer; it reads IGIFGVATVLCDLLLLHILP. The Cytoplasmic segment spans residues 359–399; sequence KRHYYKQKKFKYAEDMGPGEGEHDPVATSSTLGLQENMRTS. Positions 374–399 are disordered; it reads MGPGEGEHDPVATSSTLGLQENMRTS. Residues 385 to 399 show a composition bias toward polar residues; the sequence is ATSSTLGLQENMRTS. S387 and S388 each carry phosphoserine. At T389 the chain carries Phosphothreonine.

This sequence belongs to the P2X receptor family. Functional P2XRs are organized as homomeric and heteromeric trimers. Homotrimer. Forms heterodimer with P2RX2. Forms heterodimer with P2RX4. Forms heterodimer with P2RX5. In terms of tissue distribution, high levels in vas deferens and urinary bladder. Lower extent in spinal cord, coeliac ganglion, lung and spleen (probably in the smooth muscle part of both organs).

It is found in the cell membrane. It catalyses the reaction Ca(2+)(in) = Ca(2+)(out). It carries out the reaction K(+)(in) = K(+)(out). The enzyme catalyses Na(+)(in) = Na(+)(out). With respect to regulation, activated by low concentrations of ATP (&lt;1 uM). Undergoes rapid desensitisation. Sensitives to the ATP agonist:alpha/beta-methylene-ATP. Modulated by cholesterol. Functionally, ATP-gated nonselective transmembrane cation channel permeable to potassium, sodium and with relatively high calcium permeability. Furthermore, CTP functions as a weak affinity agonist for P2RX1. Plays a role a role in urogenital, immune and cardiovascular function. Specifically, plays an important role in neurogenic contraction of smooth muscle of the vas deferens, and therefore is essential for normal male reproductive function. In addition, contributes to smooth muscle contractions of the urinary bladder. On platelets, contributes to platelet activation and aggregation and thereby, also to thrombosis. On neutrophils, it is involved in chemotaxis and in mitigating the activation of circulating cells. This chain is P2X purinoceptor 1 (P2rx1), found in Rattus norvegicus (Rat).